The following is a 197-amino-acid chain: Cytochrome c oxidase polypeptide 5, mitochondrial (197 aa).

A mitochondrion-targeting transit peptide spans 1–13 (MFLRSVTRAAARS). Over 14-129 (SAVPTTGLRS…KGENLKIFFK (116 aa)) the chain is Mitochondrial matrix. The chain crosses the membrane as a helical span at residues 130 to 147 (VAQLTLVSFGIFYVIHLF). The Mitochondrial intermembrane portion of the chain corresponds to 148–197 (AKPQPKTMTKEWQEASNEYAKQEKINPIYGISAEGYEGKGFVQSPPAEKQ).

Belongs to the cytochrome c oxidase IV family. In terms of assembly, component of the cytochrome c oxidase (complex IV, CIV), a multisubunit enzyme composed of a catalytic core of 3 subunits and seevral supernumerary subunits. The complex exists as a monomer or a dimer and forms supercomplexes (SCs) in the inner mitochondrial membrane with ubiquinol-cytochrome c oxidoreductase (cytochrome b-c1 complex, complex III, CIII).

It localises to the mitochondrion inner membrane. It functions in the pathway energy metabolism; oxidative phosphorylation. Component of the cytochrome c oxidase, the last enzyme in the mitochondrial electron transport chain which drives oxidative phosphorylation. The respiratory chain contains 3 multisubunit complexes succinate dehydrogenase (complex II, CII), ubiquinol-cytochrome c oxidoreductase (cytochrome b-c1 complex, complex III, CIII) and cytochrome c oxidase (complex IV, CIV), that cooperate to transfer electrons derived from NADH and succinate to molecular oxygen, creating an electrochemical gradient over the inner membrane that drives transmembrane transport and the ATP synthase. Cytochrome c oxidase is the component of the respiratory chain that catalyzes the reduction of oxygen to water. Electrons originating from reduced cytochrome c in the intermembrane space (IMS) are transferred via the dinuclear copper A center (CU(A)) of subunit 2 and heme A of subunit 1 to the active site in subunit 1, a binuclear center (BNC) formed by heme A3 and copper B (CU(B)). The BNC reduces molecular oxygen to 2 water molecules using 4 electrons from cytochrome c in the IMS and 4 protons from the mitochondrial matrix. The polypeptide is Cytochrome c oxidase polypeptide 5, mitochondrial (cox5) (Aspergillus niger).